Consider the following 615-residue polypeptide: Dihydroxy-acid dehydratase (615 aa).

Residue Asp-85 participates in Mg(2+) binding. Cys-126 serves as a coordination point for [2Fe-2S] cluster. Mg(2+)-binding residues include Asp-127 and Lys-128. Lys-128 carries the N6-carboxylysine modification. Cys-199 is a binding site for [2Fe-2S] cluster. Glu-495 lines the Mg(2+) pocket. Ser-521 (proton acceptor) is an active-site residue.

The protein belongs to the IlvD/Edd family. As to quaternary structure, homodimer. It depends on [2Fe-2S] cluster as a cofactor. Requires Mg(2+) as cofactor.

It carries out the reaction (2R)-2,3-dihydroxy-3-methylbutanoate = 3-methyl-2-oxobutanoate + H2O. The catalysed reaction is (2R,3R)-2,3-dihydroxy-3-methylpentanoate = (S)-3-methyl-2-oxopentanoate + H2O. The protein operates within amino-acid biosynthesis; L-isoleucine biosynthesis; L-isoleucine from 2-oxobutanoate: step 3/4. Its pathway is amino-acid biosynthesis; L-valine biosynthesis; L-valine from pyruvate: step 3/4. Functions in the biosynthesis of branched-chain amino acids. Catalyzes the dehydration of (2R,3R)-2,3-dihydroxy-3-methylpentanoate (2,3-dihydroxy-3-methylvalerate) into 2-oxo-3-methylpentanoate (2-oxo-3-methylvalerate) and of (2R)-2,3-dihydroxy-3-methylbutanoate (2,3-dihydroxyisovalerate) into 2-oxo-3-methylbutanoate (2-oxoisovalerate), the penultimate precursor to L-isoleucine and L-valine, respectively. The polypeptide is Dihydroxy-acid dehydratase (Mannheimia succiniciproducens (strain KCTC 0769BP / MBEL55E)).